The chain runs to 128 residues: MPKSVIIPAGSSAPLAPFVPGTLADGVVYVSGTLAFDQHNNVLFADDPKAQTRHVLETIRKVIETAGGTMADVTFNSIFITDWKNYAAINEIYAEFFPGDKPARFCIQCGLVKPDALVEIATIAHIAK.

The protein belongs to the RutC family. As to quaternary structure, homotrimer.

The catalysed reaction is (Z)-3-aminoacrylate + H2O + H(+) = 3-oxopropanoate + NH4(+). In terms of biological role, involved in pyrimidine catabolism. Catalyzes the deamination of 3-aminoacrylate to malonic semialdehyde, a reaction that can also occur spontaneously. RutC may facilitate the reaction and modulate the metabolic fitness, rather than catalyzing essential functions. In Escherichia coli O103:H2 (strain 12009 / EHEC), this protein is 3-aminoacrylate deaminase RutC.